The chain runs to 570 residues: Glutamate--tRNA ligase, chloroplastic/mitochondrial (570 aa).

The transit peptide at M1–F39 directs the protein to the chloroplast and mitochondrion. R57–A59 provides a ligand contact to L-glutamate. The short motif at P60–G70 is the 'HIGH' region element. H67 is a binding site for ATP. L-glutamate is bound by residues E93, Y245 to V249, and R263. Residues E266 and K301 to R305 contribute to the ATP site. Residues K301–R305 carry the 'KMSKS' region motif.

This sequence belongs to the class-I aminoacyl-tRNA synthetase family. Glutamate--tRNA ligase type 1 subfamily.

It localises to the plastid. It is found in the chloroplast. Its subcellular location is the mitochondrion. It carries out the reaction tRNA(Glu) + L-glutamate + ATP = L-glutamyl-tRNA(Glu) + AMP + diphosphate. Its function is as follows. Catalyzes the attachment of glutamate to tRNA(Glu) in a two-step reaction: glutamate is first activated by ATP to form Glu-AMP and then transferred to the acceptor end of tRNA(Glu). This Arabidopsis thaliana (Mouse-ear cress) protein is Glutamate--tRNA ligase, chloroplastic/mitochondrial.